The chain runs to 185 residues: Ribosome-recycling factor (185 aa).

It belongs to the RRF family.

The protein localises to the cytoplasm. Functionally, responsible for the release of ribosomes from messenger RNA at the termination of protein biosynthesis. May increase the efficiency of translation by recycling ribosomes from one round of translation to another. This chain is Ribosome-recycling factor, found in Exiguobacterium sibiricum (strain DSM 17290 / CCUG 55495 / CIP 109462 / JCM 13490 / 255-15).